The chain runs to 2343 residues: Coagulation factor VIII (2343 aa).

Residues 1 to 19 (MQVELYTCCFLCLLPFSLS) form the signal peptide. 2 Plastocyanin-like domains span residues 20–199 (ATRK…LLVC) and 207–343 (ERTQ…VDSC). The F5/8 type A 1 domain occupies 20–343 (ATRKYYLGAV…MEAYVKVDSC (324 aa)). N-linked (GlcNAc...) asparagine glycans are attached at residues N233 and N253. A sulfotyrosine mark is found at Y359 and Y408. 2 consecutive Plastocyanin-like domains span residues 393–567 (KTWV…LLIC) and 577–724 (NQMM…VSSC). The 332-residue stretch at 393–724 (KTWVHYIAAE…MTALLKVSSC (332 aa)) folds into the F5/8 type A 2 domain. A glycan (N-linked (GlcNAc...) asparagine) is linked at N595. 3 positions are modified to sulfotyrosine: Y731, Y732, and Y736. Residues 752 to 761 (PRSFSQNSRH) show a composition bias toward polar residues. Disordered stretches follow at residues 752–774 (PRSF…ATTT) and 828–865 (ADDH…PEPE). The tract at residues 754–1659 (SFSQNSRHPS…NPPVSKHHQR (906 aa)) is b. Composition is skewed to basic and acidic residues over residues 828 to 841 (ADDH…RNKG) and 850 to 861 (PELRHSEDREFT). N-linked (GlcNAc...) asparagine glycans are attached at residues N877, N921, N937, N938, N956, N1007, N1019, N1037, N1062, N1069, and N1080. The tract at residues 1124–1147 (GKNSLSSEQRPSPKQLTSLGSEKS) is disordered. Residues 1125–1147 (KNSLSSEQRPSPKQLTSLGSEKS) show a composition bias toward polar residues. Residues N1179, N1193, N1275, N1290, N1308, N1341, N1391, N1419, N1429, N1453, N1547, and N1618 are each glycosylated (N-linked (GlcNAc...) asparagine). Residues 1302 to 1314 (TTRMSSNASQHVI) are compositionally biased toward polar residues. The tract at residues 1302-1326 (TTRMSSNASQHVITQRGKRSLKQPR) is disordered. The segment at 1592–1632 (KSQKKSQTNTAFKRKDTILPLGPCENNDSTAAINEGQDKPQ) is disordered. Residues Y1675 and Y1691 each carry the sulfotyrosine modification. 2 Plastocyanin-like domains span residues 1705–1869 (KTRH…LLIC) and 1879–2032 (GRQV…SKKC). One can recognise an F5/8 type A 3 domain in the interval 1705 to 2032 (KTRHYFIAAV…TLFLVYSKKC (328 aa)). N1821 carries N-linked (GlcNAc...) asparagine glycosylation. F5/8 type C domains lie at 2032 to 2180 (CQTP…LLGC) and 2185 to 2337 (CSMP…VLGC). Disulfide bonds link C2032-C2180 and C2185-C2337. 2 N-linked (GlcNAc...) asparagine glycosylation sites follow: N2129 and N2281.

It belongs to the multicopper oxidase family. In terms of assembly, interacts with vWF. vWF binding is essential for the stabilization of F8 in circulation. Post-translationally, proteolytically cleaved by cathepsin CTSG to produce a partially activated form.

The protein localises to the secreted. The protein resides in the extracellular space. Its function is as follows. Factor VIII, along with calcium and phospholipid, acts as a cofactor for factor IXa when it converts factor X to the activated form, factor Xa. This chain is Coagulation factor VIII (F8), found in Canis lupus familiaris (Dog).